The primary structure comprises 90 residues: UPF0298 protein YlbG (90 aa).

This sequence belongs to the UPF0298 family.

It localises to the cytoplasm. This is UPF0298 protein YlbG (ylbG) from Bacillus subtilis (strain 168).